The following is a 355-amino-acid chain: Receptor-like serine/threonine-protein kinase At1g78530 (355 aa).

Over 1–8 (MANAKETT) the chain is Extracellular. A helical membrane pass occupies residues 9 to 29 (FYITISVVAFVIGKIVIALLF). The Cytoplasmic segment spans residues 30 to 355 (YKRWKRKHTI…YIKLSTRSSF (326 aa)). In terms of domain architecture, Protein kinase spans 75-347 (LSNKDILGSG…TEVVKLLEYI (273 aa)). ATP is bound by residues 81–89 (LGSGGFGTV) and lysine 103. Tyrosine 148 bears the Phosphotyrosine mark. Aspartate 197 (proton acceptor) is an active-site residue. Phosphoserine occurs at positions 201 and 230. Threonine 231 and threonine 236 each carry phosphothreonine. Tyrosine 244 is subject to Phosphotyrosine.

The protein belongs to the protein kinase superfamily. Ser/Thr protein kinase family.

The protein resides in the cell membrane. It carries out the reaction L-seryl-[protein] + ATP = O-phospho-L-seryl-[protein] + ADP + H(+). The catalysed reaction is L-threonyl-[protein] + ATP = O-phospho-L-threonyl-[protein] + ADP + H(+). In Arabidopsis thaliana (Mouse-ear cress), this protein is Receptor-like serine/threonine-protein kinase At1g78530.